We begin with the raw amino-acid sequence, 313 residues long: Short-chain dehydrogenase/reductase family 9C member 7 (313 aa).

29 to 53 (FITGCDSGFGNLLAKQLVDRGMKVL) is a binding site for NADP(+). Position 160 (S160) interacts with substrate. The Proton acceptor role is filled by Y172. S185 is modified (phosphoserine).

The protein belongs to the short-chain dehydrogenases/reductases (SDR) family. As to expression, highly expressed in liver.

It is found in the cytoplasm. The catalysed reaction is a N-[omega-(9R,10R)-epoxy-(13R)-hydroxy-(11E)-octadecenoyloxy]acyl-beta-D-glucosyl-(1&lt;-&gt;1)-sphing-4E-enine + NAD(+) = a N-[omega-(9R,10R)-epoxy-13-oxo-(11E)-octadecenoyloxy]acyl-beta-D-glucosyl-(1&lt;-&gt;1)-sphing-4E-enine + NADH + H(+). It catalyses the reaction a N-[omega-(9R,10R)-epoxy-(13R)-hydroxy-(11E)-octadecenoyloxy]-acylsphing-4E-enine + NAD(+) = a N-[omega-(9R,10R)-epoxy-13-oxo-(11E)-octadecenoyloxy]-acylsphing-4E-enine + NADH + H(+). In terms of biological role, plays a crucial role in the formation of the epidermal permeability barrier. Catalyzes the NAD+-dependent dehydrogenation of the linoleate 9,10-trans-epoxy-11E-13-alcohol esterified in omega-O-acylceramides (such as in N-[omega-(9R,10R)-epoxy-(13R)-hydroxy-(11E)-octadecenoyloxy]-acylsphing-4E-enine) to the corresponding 13-ketone, the reactive moiety required for binding of epidermal ceramides to proteins. Displays weak conversion of all-trans-retinal to all-trans-retinol in the presence of NADH. Has apparently no steroid dehydrogenase activity. In Mus musculus (Mouse), this protein is Short-chain dehydrogenase/reductase family 9C member 7 (Sdr9c7).